The sequence spans 347 residues: Holliday junction branch migration complex subunit RuvB (347 aa).

Positions 1–186 (MKDENSISFL…FGITARFELY (186 aa)) are large ATPase domain (RuvB-L). Residues Leu25, Arg26, Gly67, Lys70, Thr71, Thr72, 133 to 135 (EDY), Arg176, Tyr186, and Arg223 each bind ATP. Residue Thr71 participates in Mg(2+) binding. The small ATPAse domain (RuvB-S) stretch occupies residues 187–257 (SEIELVEIIK…IVSIGLEMLR (71 aa)). Residues 260–347 (GEGLDEQDRN…GLNENQRVSF (88 aa)) are head domain (RuvB-H). DNA is bound by residues Arg315 and Arg320.

This sequence belongs to the RuvB family. As to quaternary structure, homohexamer. Forms an RuvA(8)-RuvB(12)-Holliday junction (HJ) complex. HJ DNA is sandwiched between 2 RuvA tetramers; dsDNA enters through RuvA and exits via RuvB. An RuvB hexamer assembles on each DNA strand where it exits the tetramer. Each RuvB hexamer is contacted by two RuvA subunits (via domain III) on 2 adjacent RuvB subunits; this complex drives branch migration. In the full resolvosome a probable DNA-RuvA(4)-RuvB(12)-RuvC(2) complex forms which resolves the HJ.

It localises to the cytoplasm. The enzyme catalyses ATP + H2O = ADP + phosphate + H(+). Functionally, the RuvA-RuvB-RuvC complex processes Holliday junction (HJ) DNA during genetic recombination and DNA repair, while the RuvA-RuvB complex plays an important role in the rescue of blocked DNA replication forks via replication fork reversal (RFR). RuvA specifically binds to HJ cruciform DNA, conferring on it an open structure. The RuvB hexamer acts as an ATP-dependent pump, pulling dsDNA into and through the RuvAB complex. RuvB forms 2 homohexamers on either side of HJ DNA bound by 1 or 2 RuvA tetramers; 4 subunits per hexamer contact DNA at a time. Coordinated motions by a converter formed by DNA-disengaged RuvB subunits stimulates ATP hydrolysis and nucleotide exchange. Immobilization of the converter enables RuvB to convert the ATP-contained energy into a lever motion, pulling 2 nucleotides of DNA out of the RuvA tetramer per ATP hydrolyzed, thus driving DNA branch migration. The RuvB motors rotate together with the DNA substrate, which together with the progressing nucleotide cycle form the mechanistic basis for DNA recombination by continuous HJ branch migration. Branch migration allows RuvC to scan DNA until it finds its consensus sequence, where it cleaves and resolves cruciform DNA. The sequence is that of Holliday junction branch migration complex subunit RuvB from Borreliella burgdorferi (strain ATCC 35210 / DSM 4680 / CIP 102532 / B31) (Borrelia burgdorferi).